The sequence spans 236 residues: MKSLSFLNHEFEAFPSPELALTDPNGLLAIGGDLRPERLLTAYYNGIFPWFNADDPILWWSPDPRAIFMLGKIRISTSLCKYLKKQPWHFTINHAFTSVMAGCAEPRPKQNGTWITDEIQMAYRELHQNGHAHSIEVWEGEQLIGGLYGLAIGQVFCGESMFHRQTNASKAAIVVLQQHLIKRGFKLIDAQVMNPHLESLGAKAIKRTHFIELLTQFRDKKVHPDAWIPSEVFLEL.

It belongs to the L/F-transferase family.

It is found in the cytoplasm. The catalysed reaction is N-terminal L-lysyl-[protein] + L-leucyl-tRNA(Leu) = N-terminal L-leucyl-L-lysyl-[protein] + tRNA(Leu) + H(+). The enzyme catalyses N-terminal L-arginyl-[protein] + L-leucyl-tRNA(Leu) = N-terminal L-leucyl-L-arginyl-[protein] + tRNA(Leu) + H(+). It carries out the reaction L-phenylalanyl-tRNA(Phe) + an N-terminal L-alpha-aminoacyl-[protein] = an N-terminal L-phenylalanyl-L-alpha-aminoacyl-[protein] + tRNA(Phe). In terms of biological role, functions in the N-end rule pathway of protein degradation where it conjugates Leu, Phe and, less efficiently, Met from aminoacyl-tRNAs to the N-termini of proteins containing an N-terminal arginine or lysine. This Shewanella putrefaciens (strain CN-32 / ATCC BAA-453) protein is Leucyl/phenylalanyl-tRNA--protein transferase.